The following is a 212-amino-acid chain: Ras-related protein Rab-2A (212 aa).

The residue at position 2 (alanine 2) is an N-acetylalanine. The segment at 2–19 (AYAYLFKYIIIGDTGVGK) is required for interaction with PRKCI. GTP contacts are provided by glycine 16, valine 17, glycine 18, lysine 19, serine 20, cysteine 21, and threonine 38. Position 20 (serine 20) interacts with Mg(2+). The short motif at 37-42 (LTMGVE) is the Switch 1 element. 2 residues coordinate Mg(2+): threonine 38 and aspartate 61. The Switch 2 signature appears at 63–72 (AGQESFRSIT). 6 residues coordinate GTP: glycine 64, asparagine 119, lysine 120, aspartate 122, alanine 150, and lysine 151. The interval 190–212 (QHAATNASHGGNQGGQQAGGGCC) is disordered. Residues 200–212 (GNQGGQQAGGGCC) show a composition bias toward gly residues. S-geranylgeranyl cysteine attachment occurs at residues cysteine 211 and cysteine 212.

Belongs to the small GTPase superfamily. Rab family. As to quaternary structure, interacts with PRKCI. Interacts with TRIP11. Interacts (in GTP-bound form) with GARIN1B. Interacts (GTP-bound) with HOPS complex component VPS39; interaction contributes to obtaining a functional HOPS complex that promotes autophagosome-lysosome membrane fusion driven by STX17-SNAP29-VAMP8. May interact with VPS41. Mg(2+) is required as a cofactor. Prenylated. Prenylation is required for association with cellular membranes.

It localises to the endoplasmic reticulum-Golgi intermediate compartment membrane. Its subcellular location is the melanosome. The protein localises to the endoplasmic reticulum membrane. The protein resides in the golgi apparatus membrane. It is found in the cytoplasmic vesicle. It localises to the secretory vesicle. Its subcellular location is the acrosome. The protein localises to the autophagosome membrane. The catalysed reaction is GTP + H2O = GDP + phosphate + H(+). Regulated by guanine nucleotide exchange factors (GEFs) which promote the exchange of bound GDP for free GTP, GTPase activating proteins (GAPs) which increase the GTP hydrolysis activity, and GDP dissociation inhibitors (GDIs) which inhibit the dissociation of the nucleotide from the GTPase. Its function is as follows. The small GTPases Rab are key regulators of intracellular membrane trafficking, from the formation of transport vesicles to their fusion with membranes. Rabs cycle between active GTP-bound and inactive GDP-bound states. In their active state, drive transport of vesicular carriers from donor organelles to acceptor organelles to regulate the membrane traffic that maintains organelle identity and morphology. RAB2A regulates autophagy by promoting autophagosome-lysosome fusion via recruitment of the HOPS endosomal tethering complex; this process involves autophagosomal RAB2A and lysosomal RAB39A recruitment of HOPS subcomplexes VPS39-VPS11 and VPS41-VPS16-VPS18-VPS33A, respectively, which assemble into a functional complex to mediate membrane tethering and SNAREs-driven membrane fusion. Required for protein transport from the endoplasmic reticulum to the Golgi complex. Regulates the compacted morphology of the Golgi. Together with RAB2B, redundantly required for efficient autophagic flux. The chain is Ras-related protein Rab-2A (Rab2a) from Rattus norvegicus (Rat).